A 575-amino-acid chain; its full sequence is Transcription factor coe2 (575 aa).

Residues 63 to 66 are interaction with DNA; the sequence is RKSN. Residues 151-170 form a C5-type zinc finger; it reads CRVLLTHEVMCSRCCEKKSC. 2 interaction with DNA regions span residues 197–204 and 236–239; these read NCLKTAGN and NNSK. Residues 254 to 336 enclose the IPT/TIG domain; the sequence is PCIKAISPSE…CKGAPGRFIY (83 aa). The tract at residues 450 to 487 is disordered; sequence IRNTSSISPRGYSSSSTPQQSNYSTPSNSMNGYSNVPM. Low complexity predominate over residues 454–476; the sequence is SSISPRGYSSSSTPQQSNYSTPS. Over residues 477–487 the composition is skewed to polar residues; sequence NSMNGYSNVPM.

This sequence belongs to the COE family.

The protein localises to the nucleus. In terms of biological role, may play a pivotal role in the transcriptional cascade that specifies primary neurons in embryos. Stabilizes the higher neural potential of selected progenitor cells that express neurog2/X-ngnr-1 by maintaining Delta-Notch signaling. Thus ensures the transition between neural competence and irreversible commitment to a neural fate. Also promotes neuronal differentiation by activating neurod1 expression, directly or indirectly. The chain is Transcription factor coe2 from Xenopus tropicalis (Western clawed frog).